A 725-amino-acid chain; its full sequence is Exocyst complex component 8 (725 aa).

Ser-19 is modified (phosphoserine). The disordered stretch occupies residues 137–159 (AGFFSTPGGASRDGSGPGEEGKQ). Thr-142 is modified (phosphothreonine). Residues 182–282 (YLVYNGDLVE…WLEVLEDTKR (101 aa)) form the PH domain. A disordered region spans residues 285–328 (SEKRRREQEEAAAPRGPPQVTSKATNPFEDDEEEEPAVPEVEEE). Residues 312 to 328 (FEDDEEEEPAVPEVEEE) are compositionally biased toward acidic residues.

The protein belongs to the EXO84 family. As to quaternary structure, the exocyst complex is composed of EXOC1, EXOC2, EXOC3, EXOC4, EXOC5, EXOC6, EXOC7 and EXOC8. Interacts (via PH domain) with GTP-bound RALA and RALB. Interacts with SH3BP1; required for the localization of both SH3BP1 and the exocyst to the leading edge of migrating cells.

Its subcellular location is the cytoplasm. It is found in the perinuclear region. The protein localises to the cell projection. It localises to the growth cone. In terms of biological role, component of the exocyst complex involved in the docking of exocytic vesicles with fusion sites on the plasma membrane. The chain is Exocyst complex component 8 (EXOC8) from Homo sapiens (Human).